Here is a 442-residue protein sequence, read N- to C-terminus: G-protein coupled receptor family C group 5 member C (442 aa).

Positions 1–23 are cleaved as a signal peptide; that stretch reads MAIHRTVLMCLGLPLFLLPGARA. Topologically, residues 24–50 are extracellular; it reads QEQAPPGCSPDLNPLYYNLCDRSEAWG. The chain crosses the membrane as a helical span at residues 51 to 71; sequence IILEAVAGAGVVTTFVLTIIL. Over 72 to 85 the chain is Cytoplasmic; it reads VASLPFVQDTKKRS. The chain crosses the membrane as a helical span at residues 86–106; it reads LLGTQVFFLLGTLGLFCLVFA. Topologically, residues 107–120 are extracellular; the sequence is CVVKPSFSTCASRR. The chain crosses the membrane as a helical span at residues 121-141; that stretch reads FLFGVLFAICFSCLVAHVLAL. Residues 142–155 are Cytoplasmic-facing; it reads HFLVRKNHGPRGWV. The helical transmembrane segment at 156 to 176 threads the bilayer; sequence IFLVALLLSLVEVIINTEWLI. Residues 177–209 lie on the Extracellular side of the membrane; that stretch reads ITLVRGAGTEGDALGNGSAGWVAVSPCAIANAD. The N-linked (GlcNAc...) asparagine glycan is linked to N192. A helical transmembrane segment spans residues 210-230; the sequence is FVMALIYVMLLLLCAFSGAWS. Topologically, residues 231–242 are cytoplasmic; sequence ALCGRFKRWRKH. Residues 243–263 form a helical membrane-spanning segment; that stretch reads GVFILLTTTASIAVWVVWIVM. Residues 264–280 lie on the Extracellular side of the membrane; it reads YTYGNRQHNSPTWDDPT. The chain crosses the membrane as a helical span at residues 281-301; sequence LAIALATNAWAFVLFYVIPEV. The Cytoplasmic segment spans residues 302 to 442; it reads SQVTRSSPEQ…QVFRNPYVWD (141 aa). A phosphoserine mark is found at S345, S384, S404, and S407. Residue Y415 is modified to Phosphotyrosine. T424 is subject to Phosphothreonine.

It belongs to the G-protein coupled receptor 3 family.

It is found in the cell membrane. This retinoic acid-inducible G-protein coupled receptor provide evidence for a possible interaction between retinoid and G-protein signaling pathways. In Bos taurus (Bovine), this protein is G-protein coupled receptor family C group 5 member C (GPRC5C).